The following is a 322-amino-acid chain: MNNPWELDHFREELVSVNIDAAQPQQLFLSVRGPPRTTPKQPVAIIECGAAATTRWWTVVQRLLCPTLRVYCYDRAGLGRSGHAVVFPRTASSMAFELERLFETVGVEPPFIFITHSYGAIITREFLARLPRPKQSVVGMLFVESNQEKTHQELIVSSHLSTSLSGLNSLVSTGLYEDHQYSEAEVEAILKYESGTTTNRSDKPSAAISELENMESSARALADREQLQKHILSPNPITVMRGDITRDLRRLFKTSGVMHQGAEEIESFLEHFARVDRQLQREILQLSHSARFVQAKKSGHHVEATEPELITAEVRRIVKLVR.

An AB hydrolase-1 domain is found at 36–319; it reads RTTPKQPVAI…ITAEVRRIVK (284 aa).

Belongs to the AB hydrolase superfamily.

It functions in the pathway mycotoxin biosynthesis. Functionally, AB hydrolase superfamily protein; part of the gene cluster that mediates the biosynthesis of gramillins A and B, bicyclic lipopeptides that induce cell death in maize leaves but not in wheat leaves. The nonribosomal peptide synthetase GRA1 incorporates respectively a glutamic adic (Glu), a leucine (Leu), a serine (Ser), a hydroxyglutamine (HOGln), a 2-amino decanoic acid, and 2 cysteins (CysB and CysA). The biosynthesis of 2-amino decanoic acid incorporated in gramillins could be initiated by a fatty acid synthase composed of the alpha and beta subunits FGSG_00036 and FGSG_11656. The cytochrome P450 monooxygenase FGSG_15680 could hydroxylate the fatty acid chain. Subsequent oxidation to the ketone by the oxidoreductase FGSG_00048 and transamination by aminotransferase FGSG_00049 could form 2-amino-decanoic acid. On the other hand, FGSG_15680 could also be responsible for the HO-modified glutamine at the gamma-position. Whether hydroxylation occurs on the fully assembled product or on the Gln residue prior to assembly into the gramillins requires further proof. The thioredoxin FGSG_00043 could also be required for the disulfide-bond formation between CysA and CysB. The specific involvement of the remaining proteins from the cluster is more difficult to discern, but could have broader regulatory (FGSG_00040 and FGSG_11657) or enzymatic functions (FGSG_00044 and FGSG_00045). The final C-domain of GRA1 does not possess the expected sequence of a termination CT domain, often implicated in macrocyclization and release of a cyclopeptidein fungal NRPs; and the thioesterase FGSG_00047 may act in concert with the terminal C-domain of GRA1 to catalyze the formation of the macrocyclic anhydride and release of the products. This chain is AB hydrolase superfamily protein FGSG_00044, found in Gibberella zeae (strain ATCC MYA-4620 / CBS 123657 / FGSC 9075 / NRRL 31084 / PH-1) (Wheat head blight fungus).